Reading from the N-terminus, the 465-residue chain is Ribosomal oxygenase 2 (465 aa).

Positions 139–271 (QPQRFKDELW…NSWGDFLLDT (133 aa)) constitute a JmjC domain. The Fe cation site is built by H179, D181, and H240. S309 carries the post-translational modification Phosphoserine.

This sequence belongs to the ROX family. MINA53 subfamily. It depends on Fe(2+) as a cofactor.

It is found in the nucleus. Its subcellular location is the nucleolus. The enzyme catalyses L-histidyl-[ribosomal protein uL15] + 2-oxoglutarate + O2 = (3S)-3-hydroxy-L-histidyl-[ribosomal protein uL15] + succinate + CO2. The catalysed reaction is L-histidyl-[protein] + 2-oxoglutarate + O2 = (3S)-3-hydroxy-L-histidyl-[protein] + succinate + CO2. Oxygenase that can act as both a histone lysine demethylase and a ribosomal histidine hydroxylase. Is involved in the demethylation of trimethylated 'Lys-9' on histone H3 (H3K9me3), leading to an increase in ribosomal RNA expression. Also catalyzes the hydroxylation of 60S ribosomal protein L27a on 'His-39'. May play an important role in cell growth and survival. May be involved in ribosome biogenesis, most likely during the assembly process of pre-ribosomal particles. In Pongo abelii (Sumatran orangutan), this protein is Ribosomal oxygenase 2 (RIOX2).